Reading from the N-terminus, the 313-residue chain is Olfactory receptor 4M2 (313 aa).

The Cytoplasmic segment spans residues 1-25 (METANYTKVTEFVLTGLSQTPEVQL). A helical membrane pass occupies residues 26-46 (VLFVIFLSFYLFILPGNILII). Residues 47-57 (CTISLDPHLTS) are Extracellular-facing. A helical transmembrane segment spans residues 58-78 (PMYFLLANLAFLDIWYSSITA). At 79–97 (PEMLIDFFVERKIISFDEC) the chain is on the cytoplasmic side. Cys97 and Cys179 are joined by a disulfide. The chain crosses the membrane as a helical span at residues 98–118 (IAQLFFLHFAGASEMFLLTVM). Over 119–142 (AFDLYTAICRPLHYATIMNQRLCC) the chain is Extracellular. A helical membrane pass occupies residues 143-163 (ILVALSWRGGFIHSIIQVALI). Residues 164–204 (VRLPFCGPNELDSYFCDITQVVRIACANTFPEELVMICSSG) are Cytoplasmic-facing. The chain crosses the membrane as a helical span at residues 205–225 (LISVVCLIALLMSYAFLLALL). The Extracellular segment spans residues 226–238 (KKLSGSGENTNRA). Residues 239-259 (VSTCYSHITIVVLMFGPSIYI) form a helical membrane-spanning segment. Topologically, residues 260–270 (YARPFDSFSLD) are cytoplasmic. A helical membrane pass occupies residues 271–291 (KVVSVFNTLIFPLHNPIIYTL). Residues 292 to 313 (RNKEVKAAMRKLVTKYILCKEK) are Extracellular-facing.

It belongs to the G-protein coupled receptor 1 family.

It is found in the membrane. Odorant receptor. This Homo sapiens (Human) protein is Olfactory receptor 4M2.